We begin with the raw amino-acid sequence, 419 residues long: Phospho-N-acetylmuramoyl-pentapeptide-transferase (419 aa).

The next 10 helical transmembrane spans lie at 22–42 (YVSF…TVIG), 72–92 (TPTM…LLLA), 99–119 (ILLM…DDYI), 135–155 (IIGQ…NPAV), 208–228 (VLFG…FISN), 238–258 (GLAT…AYVS), 278–298 (LTIF…YNAY), 303–323 (FMGD…ALII), 328–348 (LLPI…IQVF), and 396–416 (KITV…IATL).

It belongs to the glycosyltransferase 4 family. MraY subfamily. Mg(2+) serves as cofactor.

The protein localises to the cell inner membrane. The enzyme catalyses UDP-N-acetyl-alpha-D-muramoyl-L-alanyl-gamma-D-glutamyl-meso-2,6-diaminopimeloyl-D-alanyl-D-alanine + di-trans,octa-cis-undecaprenyl phosphate = di-trans,octa-cis-undecaprenyl diphospho-N-acetyl-alpha-D-muramoyl-L-alanyl-D-glutamyl-meso-2,6-diaminopimeloyl-D-alanyl-D-alanine + UMP. Its pathway is cell wall biogenesis; peptidoglycan biosynthesis. Functionally, catalyzes the initial step of the lipid cycle reactions in the biosynthesis of the cell wall peptidoglycan: transfers peptidoglycan precursor phospho-MurNAc-pentapeptide from UDP-MurNAc-pentapeptide onto the lipid carrier undecaprenyl phosphate, yielding undecaprenyl-pyrophosphoryl-MurNAc-pentapeptide, known as lipid I. The sequence is that of Phospho-N-acetylmuramoyl-pentapeptide-transferase from Porphyromonas gingivalis (strain ATCC 33277 / DSM 20709 / CIP 103683 / JCM 12257 / NCTC 11834 / 2561).